The following is a 203-amino-acid chain: Dual-action ribosomal maturation protein DarP (203 aa).

Disordered stretches follow at residues 1 to 31 and 182 to 203; these read MPPMTRKTRIQPIEPVAEEDDNGYDRPSKSQ and GGASDSDDEAADDAGDDHDDEA. Acidic residues predominate over residues 186-203; that stretch reads DSDDEAADDAGDDHDDEA.

The protein belongs to the DarP family.

It localises to the cytoplasm. Its function is as follows. Member of a network of 50S ribosomal subunit biogenesis factors which assembles along the 30S-50S interface, preventing incorrect 23S rRNA structures from forming. Promotes peptidyl transferase center (PTC) maturation. The polypeptide is Dual-action ribosomal maturation protein DarP (Burkholderia cenocepacia (strain HI2424)).